The sequence spans 413 residues: Arginine biosynthesis bifunctional protein ArgJ (413 aa).

Substrate contacts are provided by threonine 163, lysine 189, threonine 200, glutamate 286, asparagine 408, and threonine 413. The Nucleophile role is filled by threonine 200.

Belongs to the ArgJ family. As to quaternary structure, heterotetramer of two alpha and two beta chains.

The protein resides in the cytoplasm. It catalyses the reaction N(2)-acetyl-L-ornithine + L-glutamate = N-acetyl-L-glutamate + L-ornithine. It carries out the reaction L-glutamate + acetyl-CoA = N-acetyl-L-glutamate + CoA + H(+). It functions in the pathway amino-acid biosynthesis; L-arginine biosynthesis; L-ornithine and N-acetyl-L-glutamate from L-glutamate and N(2)-acetyl-L-ornithine (cyclic): step 1/1. It participates in amino-acid biosynthesis; L-arginine biosynthesis; N(2)-acetyl-L-ornithine from L-glutamate: step 1/4. Its function is as follows. Catalyzes two activities which are involved in the cyclic version of arginine biosynthesis: the synthesis of N-acetylglutamate from glutamate and acetyl-CoA as the acetyl donor, and of ornithine by transacetylation between N(2)-acetylornithine and glutamate. The chain is Arginine biosynthesis bifunctional protein ArgJ from Staphylococcus aureus (strain COL).